The chain runs to 130 residues: Small ribosomal subunit protein uS9 (130 aa).

It belongs to the universal ribosomal protein uS9 family.

The protein is Small ribosomal subunit protein uS9 of Xanthomonas oryzae pv. oryzae (strain MAFF 311018).